Reading from the N-terminus, the 762-residue chain is 5-methyltetrahydropteroyltriglutamate--homocysteine methyltransferase (762 aa).

5-methyltetrahydropteroyltri-L-glutamate-binding positions include 18–21 (REWK) and Lys-112. L-homocysteine is bound by residues 435–437 (IGS) and Glu-488. Residues 435–437 (IGS) and Glu-488 contribute to the L-methionine site. 5-methyltetrahydropteroyltri-L-glutamate contacts are provided by residues 519–520 (RC) and Trp-565. An L-homocysteine-binding site is contributed by Asp-603. Asp-603 lines the L-methionine pocket. Glu-609 is a 5-methyltetrahydropteroyltri-L-glutamate binding site. Positions 645, 647, and 669 each coordinate Zn(2+). The active-site Proton donor is His-698. Residue Cys-730 participates in Zn(2+) binding.

This sequence belongs to the vitamin-B12 independent methionine synthase family. Zn(2+) is required as a cofactor.

The catalysed reaction is 5-methyltetrahydropteroyltri-L-glutamate + L-homocysteine = tetrahydropteroyltri-L-glutamate + L-methionine. The protein operates within amino-acid biosynthesis; L-methionine biosynthesis via de novo pathway; L-methionine from L-homocysteine (MetE route): step 1/1. Functionally, catalyzes the transfer of a methyl group from 5-methyltetrahydrofolate to homocysteine resulting in methionine formation. The sequence is that of 5-methyltetrahydropteroyltriglutamate--homocysteine methyltransferase from Bacillus licheniformis (strain ATCC 14580 / DSM 13 / JCM 2505 / CCUG 7422 / NBRC 12200 / NCIMB 9375 / NCTC 10341 / NRRL NRS-1264 / Gibson 46).